The sequence spans 189 residues: Transcriptional repressor NrdR (189 aa).

A zinc finger lies at 3 to 34; it reads CPFCRGDDSRVVDSREVEDGQAIRRRRSCSGC. Residues 46 to 136 enclose the ATP-cone domain; sequence LSVVKRSGVT…VYRAFSSVED (91 aa). The disordered stretch occupies residues 152 to 189; that stretch reads RLPEGPEAAQGGPESKAGNGQAAGSGDPEGVKAEKSSE. Basic and acidic residues predominate over residues 180-189; the sequence is EGVKAEKSSE.

It belongs to the NrdR family. It depends on Zn(2+) as a cofactor.

Functionally, negatively regulates transcription of bacterial ribonucleotide reductase nrd genes and operons by binding to NrdR-boxes. The sequence is that of Transcriptional repressor NrdR from Saccharopolyspora erythraea (strain ATCC 11635 / DSM 40517 / JCM 4748 / NBRC 13426 / NCIMB 8594 / NRRL 2338).